Reading from the N-terminus, the 225-residue chain is Imidazole glycerol phosphate synthase subunit HisH (225 aa).

The Glutamine amidotransferase type-1 domain maps to 3–225 (TIAIVDYGMG…LYRNFVDWQP (223 aa)). Catalysis depends on C82, which acts as the Nucleophile. Residues H205 and E207 contribute to the active site.

As to quaternary structure, heterodimer of HisH and HisF.

It localises to the cytoplasm. The enzyme catalyses 5-[(5-phospho-1-deoxy-D-ribulos-1-ylimino)methylamino]-1-(5-phospho-beta-D-ribosyl)imidazole-4-carboxamide + L-glutamine = D-erythro-1-(imidazol-4-yl)glycerol 3-phosphate + 5-amino-1-(5-phospho-beta-D-ribosyl)imidazole-4-carboxamide + L-glutamate + H(+). It carries out the reaction L-glutamine + H2O = L-glutamate + NH4(+). It functions in the pathway amino-acid biosynthesis; L-histidine biosynthesis; L-histidine from 5-phospho-alpha-D-ribose 1-diphosphate: step 5/9. Its function is as follows. IGPS catalyzes the conversion of PRFAR and glutamine to IGP, AICAR and glutamate. The HisH subunit catalyzes the hydrolysis of glutamine to glutamate and ammonia as part of the synthesis of IGP and AICAR. The resulting ammonia molecule is channeled to the active site of HisF. The polypeptide is Imidazole glycerol phosphate synthase subunit HisH (Bordetella pertussis (strain Tohama I / ATCC BAA-589 / NCTC 13251)).